The primary structure comprises 875 residues: Protein translocase subunit SecA (875 aa).

ATP contacts are provided by residues glutamine 87, 105–109, and aspartate 512; that span reads GEGKT. 4 residues coordinate Zn(2+): cysteine 860, cysteine 862, cysteine 871, and histidine 872.

Belongs to the SecA family. Monomer and homodimer. Part of the essential Sec protein translocation apparatus which comprises SecA, SecYEG and auxiliary proteins SecDF-YajC and YidC. The cofactor is Zn(2+).

The protein localises to the cell inner membrane. It is found in the cytoplasm. It catalyses the reaction ATP + H2O + cellular proteinSide 1 = ADP + phosphate + cellular proteinSide 2.. Part of the Sec protein translocase complex. Interacts with the SecYEG preprotein conducting channel. Has a central role in coupling the hydrolysis of ATP to the transfer of proteins into and across the cell membrane, serving both as a receptor for the preprotein-SecB complex and as an ATP-driven molecular motor driving the stepwise translocation of polypeptide chains across the membrane. This chain is Protein translocase subunit SecA, found in Buchnera aphidicola subsp. Acyrthosiphon pisum (strain APS) (Acyrthosiphon pisum symbiotic bacterium).